The sequence spans 1454 residues: MSFDLTTPFDVIKTVSLSARYSWTTSQKGATLNITYNDKNFVLSSSLQLSTRASNITFQATTPFEGFQNSFIEIKYDIDNREELLASRVSVDDHSYSFVVGGYIEDKLAVFKWNLNSPLTGWTDAKFVAKIDLSSENKNLEISLEKEGDLKAIAVSGKFIGSTLDFNLRTPFRGLNNFNVFGSLNRSKRSLEMRMMNDAGQASLAGNFNSLRFNMKTPFERAEQISWEVTKTGEGSYKAEWRRNDNYATFTIEKDVSKQSFDLNIKSEFRGWEILALTGRLDQETKQAYLSGAINEQKITVTGSGSITNKIKFSMTIETPYENYRQVKAQLNYAKRKNAIKLEASSSSSDFHLLWSRSGSGLEAHLIVPNSRQNTEISINLTPTQGKITITSRFEPIRDYLQEYHVNLGQNEITADHIIKLNGHEVFKMDFERNAPEQKVHLEIHTHVAERHTTIHFHREGFSKLNFLFKREVPQYGEKHFKVDITGSGALPQKGALDIVVENTFREPAKTINARVEVDRTGARKKIMLEVSPRQSRVYIFNLEYIADLESPQHGDFTLKITTPNNSPWQNISGNWNVEDPNDATITFTVGNVTYNAKGKLTLRESTMILSSTDPSAENIYLQWKFERNGDTKDYFLKLGRKSRYGMLKLTGTITDIAHVDIEGGFKAGPFMPNEFLFTSMWGKSNGVVTGEGTFDYGNYHGSHRLVKFERNAERKSASFEWSATSNIPQYNSVSVSGNYDFNHKVVIFVVINADGRESKIDINIADINPTSSRNTAMISIPLLGPTFKRTELTVSHDFSHPNRKSISAVAKFGRSESFINAKWNRSDGFDTLEGNIEAKSRFLGDFLINVRYDMSNIADAHAEVDYLRTTTDGDKKEFKLNWTRKSTDDHLENEMVFDSNFETLSHARAYANADYGGIFKLLSGLDWDDKKISLTLEVRKNKISGILTTPFEGFETLEIDLQYKLTGKDKSVKATYQRGDRKASFNMEMSTKGKKGGSFKVDLTTPFEVVKNLHIDGQYENKVAQINYQRNDIQMNFNGKANIKSSKASFDISFTPPSGQNIRIAASYDVQDFIDGTGDEEKELASLSLEFEGNSMDFSLHGFRNDDRLYVMIHGTSSFAVLKMFHLKLDSELNTEARDGTFELTFNDFKFNVSNHFERRANNGYYFRSKIESTLTPLPALIIGLGREGQERIITIGYGEDKEITFSVKGKNNFLSGFSGKVDIPSIGYEGVEYDVDYSFPGDNHLQIKVEIDLNENGQEVEATFFLDSEGIKARLSSAVLGDHSLRVRRSVAPDGFYAEAGLDDYNLKLRGGFKNEDTARGVQLEGEVFGKRFLIDTLFQSEGKRYSEGKLIIHTPFHGMEKMGGLFTWSNQNKKIMAHAELHLPSYTTPTITGEISLDLKKKINGYVTLDVAGEEFTLKCNLAGSSISQGYTGSLEFYTTIPCCITCCGDR.

A propeptide spanning residues 1–197 (MSFDLTTPFD…KRSLEMRMMN (197 aa)) is cleaved from the precursor. 8 N-linked (GlcNAc...) asparagine glycosylation sites follow: Asn-33, Asn-55, Asn-185, Asn-571, Asn-592, Asn-825, Asn-882, and Asn-1153.

Belongs to the glycosyl hydrolase 16 family. In terms of assembly, monomer. In terms of tissue distribution, expressed in the hepatopancreas and secreted into the hemolymph. Expressed at lower levels in muscle, pleopod and gill tissue.

It is found in the secreted. Involved in the recognition of invading microorganisms. Binds specifically to beta-1,3-glucan and activates the prophenoloxidase cascade. This is Beta-1,3-glucan-binding protein from Penaeus vannamei (Whiteleg shrimp).